The chain runs to 125 residues: Small ribosomal subunit protein uS13 (125 aa).

Belongs to the universal ribosomal protein uS13 family. As to quaternary structure, part of the 30S ribosomal subunit. Forms a loose heterodimer with protein S19. Forms two bridges to the 50S subunit in the 70S ribosome.

Functionally, located at the top of the head of the 30S subunit, it contacts several helices of the 16S rRNA. In the 70S ribosome it contacts the 23S rRNA (bridge B1a) and protein L5 of the 50S subunit (bridge B1b), connecting the 2 subunits; these bridges are implicated in subunit movement. Contacts the tRNAs in the A and P-sites. In Rickettsia massiliae (strain Mtu5), this protein is Small ribosomal subunit protein uS13.